The following is a 124-amino-acid chain: uncharacterized protein (124 aa).

Disordered regions lie at residues 1-26 and 100-124; these read MRRQ…QPRP and IPGQ…GLRR. A compositionally biased stretch (polar residues) spans 102 to 115; sequence GQQSRNCSLPQTKY.

The protein localises to the cytoplasm. It is found in the cytoskeleton. The protein resides in the cilium basal body. This is an uncharacterized protein from Rattus norvegicus (Rat).